A 236-amino-acid polypeptide reads, in one-letter code: Small ribosomal subunit protein uS2 (236 aa).

It belongs to the universal ribosomal protein uS2 family.

The sequence is that of Small ribosomal subunit protein uS2 from Brevibacillus brevis (strain 47 / JCM 6285 / NBRC 100599).